Reading from the N-terminus, the 287-residue chain is Flagellin (287 aa).

This sequence belongs to the bacterial flagellin family.

The protein resides in the secreted. Its subcellular location is the bacterial flagellum. Functionally, flagellin is the subunit protein which polymerizes to form the filaments of bacterial flagella. In Listeria monocytogenes serovar 1/2a (strain ATCC BAA-679 / EGD-e), this protein is Flagellin (flaA).